We begin with the raw amino-acid sequence, 485 residues long: Glutamyl-tRNA(Gln) amidotransferase subunit A (485 aa).

Residues Lys79 and Ser154 each act as charge relay system in the active site. Residue Ser178 is the Acyl-ester intermediate of the active site.

Belongs to the amidase family. GatA subfamily. Heterotrimer of A, B and C subunits.

It carries out the reaction L-glutamyl-tRNA(Gln) + L-glutamine + ATP + H2O = L-glutaminyl-tRNA(Gln) + L-glutamate + ADP + phosphate + H(+). In terms of biological role, allows the formation of correctly charged Gln-tRNA(Gln) through the transamidation of misacylated Glu-tRNA(Gln) in organisms which lack glutaminyl-tRNA synthetase. The reaction takes place in the presence of glutamine and ATP through an activated gamma-phospho-Glu-tRNA(Gln). This chain is Glutamyl-tRNA(Gln) amidotransferase subunit A, found in Carboxydothermus hydrogenoformans (strain ATCC BAA-161 / DSM 6008 / Z-2901).